The chain runs to 342 residues: MANKTEKPTPKKLKDAAKKGQSFKFKDLTTVVIILVGTFTIISFFSLSDVMLLYRYVIINDFEINEGKYFFAVVIVFFKIIGFPLFFCVLSAVLPTLVQTKFVLATKAIKIDFSVLNPVKGLKKIFSIKTIKEFFKSILLLIILALTTYFFWINDRKIIFSQVFSSVDGLYLIWGRLFKDIILFFLAFSILVIILDFVIEFILYMKDMMMDKQEIKREYIEQEGHFETKSRRRELHIEILSEQTKSDIRNSKLVVMNPTHIAIGIYFNPEIAPAPFISLIETNQCALAVRKYANEVGIPTVRDVKLARKLYKTHTKYSFVDFEHLDEVLRLIVWLEQVENTH.

6 helical membrane-spanning segments follow: residues 28–48, 70–90, 133–153, 158–178, 181–201, and 260–280; these read LTTVVIILVGTFTIISFFSLS, FFAVVIVFFKIIGFPLFFCVL, EFFKSILLLIILALTTYFFWI, IIFSQVFSSVDGLYLIWGRLF, IILFFLAFSILVIILDFVIEF, and HIAIGIYFNPEIAPAPFISLI.

Belongs to the type III secretion exporter family.

The protein resides in the cell inner membrane. Functionally, required for surface presentation of invasion plasmid antigens. Could play a role in preserving the translocation competence of the ipa antigens. Required for invasion and for secretion of the three ipa proteins. This is Surface presentation of antigens protein SpaS (spaS) from Shigella flexneri.